Consider the following 578-residue polypeptide: DNA primase (578 aa).

The CHC2-type zinc-finger motif lies at 40 to 64 (CPFHQEKTPSFTVNFEKQFYFCFGC). The 83-residue stretch at 257–339 (KQILIVEGYV…GKNVKFIFLP (83 aa)) folds into the Toprim domain. 3 residues coordinate Mg(2+): glutamate 263, aspartate 307, and aspartate 309.

This sequence belongs to the DnaG primase family. As to quaternary structure, monomer. Interacts with DnaB. Requires Zn(2+) as cofactor. Mg(2+) is required as a cofactor.

It carries out the reaction ssDNA + n NTP = ssDNA/pppN(pN)n-1 hybrid + (n-1) diphosphate.. RNA polymerase that catalyzes the synthesis of short RNA molecules used as primers for DNA polymerase during DNA replication. The sequence is that of DNA primase from Buchnera aphidicola subsp. Baizongia pistaciae (strain Bp).